Here is a 363-residue protein sequence, read N- to C-terminus: Flagellar P-ring protein (363 aa).

The N-terminal stretch at 1–20 is a signal peptide; the sequence is MKCKLIFAVFMLAFSMPSQA.

It belongs to the FlgI family. The basal body constitutes a major portion of the flagellar organelle and consists of four rings (L,P,S, and M) mounted on a central rod.

The protein resides in the periplasm. The protein localises to the bacterial flagellum basal body. In terms of biological role, assembles around the rod to form the L-ring and probably protects the motor/basal body from shearing forces during rotation. This Shewanella oneidensis (strain ATCC 700550 / JCM 31522 / CIP 106686 / LMG 19005 / NCIMB 14063 / MR-1) protein is Flagellar P-ring protein.